A 343-amino-acid polypeptide reads, in one-letter code: N-acetyl-gamma-glutamyl-phosphate reductase (343 aa).

Cys-149 is a catalytic residue.

This sequence belongs to the NAGSA dehydrogenase family. Type 1 subfamily.

The protein localises to the cytoplasm. It catalyses the reaction N-acetyl-L-glutamate 5-semialdehyde + phosphate + NADP(+) = N-acetyl-L-glutamyl 5-phosphate + NADPH + H(+). Its pathway is amino-acid biosynthesis; L-arginine biosynthesis; N(2)-acetyl-L-ornithine from L-glutamate: step 3/4. Its function is as follows. Catalyzes the NADPH-dependent reduction of N-acetyl-5-glutamyl phosphate to yield N-acetyl-L-glutamate 5-semialdehyde. The polypeptide is N-acetyl-gamma-glutamyl-phosphate reductase (Methanococcus maripaludis (strain C6 / ATCC BAA-1332)).